Reading from the N-terminus, the 357-residue chain is Intracellular hyaluronan-binding protein 4 (357 aa).

Disordered regions lie at residues 56–116 (VVAR…HKTA), 150–186 (ERPR…KREF), and 313–357 (PGCG…PALT). A compositionally biased stretch (basic and acidic residues) spans 96 to 115 (PKQEECGGKDNSRAEKEHKT). Over residues 155–171 (CGRGRGGMQGRGRGGGI) the composition is skewed to gly residues. The span at 176–186 (DGFDQRGKREF) shows a compositional bias: basic and acidic residues. Over residues 348–357 (DDPEDFPALT) the composition is skewed to acidic residues.

The protein belongs to the SERBP1-HABP4 family. As to quaternary structure, associates with ribosomes; promoting ribosome stabilization. Interacts with EEF2/eEF2; promoting ribosome stabilization.

Its subcellular location is the nucleus. It is found in the cytoplasm. The protein resides in the stress granule. It localises to the sarcoplasm. The protein localises to the nuclear body. Its subcellular location is the nucleolus. It is found in the nucleus speckle. The protein resides in the cajal body. It localises to the gem. In terms of biological role, ribosome-binding protein that promotes ribosome hibernation, a process during which ribosomes are stabilized in an inactive state and preserved from proteasomal degradation. Acts via its association with EEF2/eEF2 factor at the A-site of the ribosome, promoting ribosome stabilization in an inactive state compatible with storage. Plays a key role in ribosome hibernation in the mature egg by promoting ribosome stabilization. Ribosomes, which are produced in large quantities during oogenesis, are stored and translationally repressed in the egg and early embryo. The chain is Intracellular hyaluronan-binding protein 4 from Gallus gallus (Chicken).